The chain runs to 377 residues: Putative FBD-associated F-box protein At5g44940 (377 aa).

The F-box domain maps to 4–50; sequence FDYISEFPDCLLTQILLNLPTKDSVKTSVLSKRWRNLWLNVPGLRLR. Positions 297–346 constitute an FBD domain; the sequence is IDFHKVPQCLISTLEYVQIEELILKEKSGIKLVDYFLENSAVLKKLTLSF.

The polypeptide is Putative FBD-associated F-box protein At5g44940 (Arabidopsis thaliana (Mouse-ear cress)).